The sequence spans 303 residues: E3 ubiquitin-protein ligase CCNB1IP1 homolog (303 aa).

The RING-type; degenerate zinc finger occupies 3-42 (CNACWRELEGQAVSTTCGHLLCTEDAKKILSNDAACPICD). The stretch at 119 to 184 (LEEVHTAYQK…YESAKRSAIQ (66 aa)) forms a coiled coil. The tract at residues 201 to 268 (VPNIMDSSDP…DIRPRQPARP (68 aa)) is disordered.

Interacts with ZIP4 and PTD. Expressed in young panicles.

The protein resides in the nucleus. The protein localises to the chromosome. It catalyses the reaction S-ubiquitinyl-[E2 ubiquitin-conjugating enzyme]-L-cysteine + [acceptor protein]-L-lysine = [E2 ubiquitin-conjugating enzyme]-L-cysteine + N(6)-ubiquitinyl-[acceptor protein]-L-lysine.. Its pathway is protein modification; protein ubiquitination. Its function is as follows. Ubiquitin E3 ligase required for class I crossover (CO) formation during meiosis. This is E3 ubiquitin-protein ligase CCNB1IP1 homolog from Oryza sativa subsp. japonica (Rice).